A 223-amino-acid chain; its full sequence is Urease accessory protein UreG (223 aa).

The tract at residues 1 to 30 is disordered; sequence MAKHSHDHTHDHHDRPRRVRKPGEPLRIGV. Residue 32-39 participates in GTP binding; it reads GPVGSGKT.

It belongs to the SIMIBI class G3E GTPase family. UreG subfamily. Homodimer. UreD, UreF and UreG form a complex that acts as a GTP-hydrolysis-dependent molecular chaperone, activating the urease apoprotein by helping to assemble the nickel containing metallocenter of UreC. The UreE protein probably delivers the nickel.

It localises to the cytoplasm. Facilitates the functional incorporation of the urease nickel metallocenter. This process requires GTP hydrolysis, probably effectuated by UreG. The sequence is that of Urease accessory protein UreG from Mycobacterium ulcerans (strain Agy99).